The chain runs to 99 residues: Teretoxin Tsu6.4 (99 aa).

The N-terminal stretch at 1 to 21 is a signal peptide; sequence MRLLLILVLLTPVIVAFSVDE. A propeptide spanning residues 22–53 is cleaved from the precursor; that stretch reads ELNNADGANAASFTADQEVRHKRNLFPAIARR.

Post-translationally, contains 3 disulfide bonds. Expressed by the venom duct.

Its subcellular location is the secreted. The polypeptide is Teretoxin Tsu6.4 (Terebra subulata (Chocolate spotted auger)).